The following is a 138-amino-acid chain: Putative pre-16S rRNA nuclease (138 aa).

It belongs to the YqgF nuclease family.

The protein localises to the cytoplasm. Could be a nuclease involved in processing of the 5'-end of pre-16S rRNA. This chain is Putative pre-16S rRNA nuclease, found in Azobacteroides pseudotrichonymphae genomovar. CFP2.